A 447-amino-acid chain; its full sequence is Phosphoglucosamine mutase (447 aa).

Ser-106 serves as the catalytic Phosphoserine intermediate. The Mg(2+) site is built by Ser-106, Asp-245, Asp-247, and Asp-249. Ser-106 bears the Phosphoserine mark.

The protein belongs to the phosphohexose mutase family. It depends on Mg(2+) as a cofactor. Post-translationally, activated by phosphorylation.

It carries out the reaction alpha-D-glucosamine 1-phosphate = D-glucosamine 6-phosphate. Catalyzes the conversion of glucosamine-6-phosphate to glucosamine-1-phosphate. The protein is Phosphoglucosamine mutase of Cupriavidus metallidurans (strain ATCC 43123 / DSM 2839 / NBRC 102507 / CH34) (Ralstonia metallidurans).